A 391-amino-acid polypeptide reads, in one-letter code: Ferrochelatase (391 aa).

Fe cation contacts are provided by His-196 and Glu-281.

This sequence belongs to the ferrochelatase family.

The protein localises to the cytoplasm. The catalysed reaction is heme b + 2 H(+) = protoporphyrin IX + Fe(2+). Its pathway is porphyrin-containing compound metabolism; protoheme biosynthesis; protoheme from protoporphyrin-IX: step 1/1. Catalyzes the ferrous insertion into protoporphyrin IX. In Prochlorococcus marinus (strain MIT 9301), this protein is Ferrochelatase.